The chain runs to 334 residues: Sulfhydrogenase 2 subunit beta (334 aa).

2 consecutive 4Fe-4S ferredoxin-type domains span residues Lys-220–Thr-250 and Cys-294–Glu-328. Positions 229, 232, 235, 239, 306, 309, 312, and 316 each coordinate [4Fe-4S] cluster.

In terms of assembly, dimer of heterotetramer of alpha, beta, gamma and delta subunits. The nickel-containing alpha and delta subunits constitute the hydrogenase activity. The beta and gamma subunits (flavin-containing dimer) constitute the sulfur reductase activity. [4Fe-4S] cluster is required as a cofactor.

It localises to the cytoplasm. It catalyses the reaction n sulfur + H2 = (n-1) sulfur + hydrogen sulfide + H(+). In terms of biological role, part of a bifunctional enzyme complex that functions as a hydrogen-evolving hydrogenase with sulfur-reducing activity. May play a role in hydrogen cycling during fermentative growth. Activity exhibited with NAD in addition to NADPH. The beta and gamma subunits form the sulfur-reducing component that catalyzes the cytoplasmic production of hydrogen sulfide in the presence of elemental sulfur. This is Sulfhydrogenase 2 subunit beta from Pyrococcus furiosus (strain ATCC 43587 / DSM 3638 / JCM 8422 / Vc1).